Consider the following 1032-residue polypeptide: Reticulon-3 (1032 aa).

A compositionally biased stretch (low complexity) spans 1 to 24; the sequence is MAEPSAATQSHSISSSSFGAEPSA. The tract at residues 1 to 61 is disordered; sequence MAEPSAATQS…SSSSSQPVSL (61 aa). A2 carries the post-translational modification N-acetylalanine. Over 2-863 the chain is Cytoplasmic; it reads AEPSAATQSH…KKTGFVFGTT (862 aa). Residue S30 is modified to Phosphoserine. A compositionally biased stretch (low complexity) spans 32-61; the sequence is GACPALGTKSCSSSCADSFVSSSSSQPVSL. S229, S243, S246, S283, S316, and S453 each carry phosphoserine. A compositionally biased stretch (basic and acidic residues) spans 545–568; sequence CEREEKTSKNFEELVSDSELHQDQ. The interval 545–617 is disordered; the sequence is CEREEKTSKN…NPKLPSTVSP (73 aa). Polar residues predominate over residues 605–617; sequence TTENPKLPSTVSP. A phosphoserine mark is found at S649 and S650. The segment covering 696–715 has biased composition (basic and acidic residues); that stretch reads NESGGSEIKDIGSKYSEQSK. Residues 696–726 are disordered; that stretch reads NESGGSEIKDIGSKYSEQSKETNGSEPLGVF. S735 is subject to Phosphoserine. Residues 844-1032 form the Reticulon domain; it reads VHDLIFWRDV…LPGIAKKKAE (189 aa). The helical intramembrane region spans 864–887; it reads LIMLLSLAAFSVISVVSYLILALL. Topologically, residues 888-947 are cytoplasmic; that stretch reads SVTISFRIYKSVIQAVQKSEEGHPFKAYLDVDITLSSEAFHNYMNAAMVHINRALKLIIR. An intramembrane region (helical) is located at residues 948–968; it reads LFLVEDLVDSLKLAVFMWLMT. Residues 969–972 lie on the Cytoplasmic side of the membrane; sequence YVGA. An intramembrane region (helical) is located at residues 973-993; sequence VFNGITLLILAELLIFSVPIV. The segment at 987–1032 is interaction with FADD; it reads IFSVPIVYEKYKTQIDHYVGIARDQTKSIVEKIQAKLPGIAKKKAE. Residues 994–1032 lie on the Cytoplasmic side of the membrane; sequence YEKYKTQIDHYVGIARDQTKSIVEKIQAKLPGIAKKKAE. Positions 1000-1002 are interaction with BACE1; sequence QID.

Homodimer. Interacts with ATL1. Interacts with RTN4. Isoform 3 interacts with BACE1, BACE2, BCL2 and FADD. Interacts with ATL2. Interacts with TMEM33. Interacts with ZFYVE27 and with KIF5A in a ZFYVE27-dependent manner. Interacts with RIGI. Interacts with TRIM25. As to quaternary structure, (Microbial infection) Interacts with Coxsackievirus A16, enterovirus 71 and poliovirus P2C proteins. In terms of assembly, (Microbial infection) Interacts with West Nile virus protein NS4A. Isoform 3 is widely expressed, with highest levels in brain, where it is enriched in neuronal cell bodies from gray matter (at protein level). Three times more abundant in macula than in peripheral retina. Isoform 1 is expressed at high levels in brain and at low levels in skeletal muscle. Isoform 2 is only found in melanoma.

The protein resides in the endoplasmic reticulum membrane. It localises to the golgi apparatus membrane. May be involved in membrane trafficking in the early secretory pathway. Inhibits BACE1 activity and amyloid precursor protein processing. May induce caspase-8 cascade and apoptosis. May favor BCL2 translocation to the mitochondria upon endoplasmic reticulum stress. Induces the formation of endoplasmic reticulum tubules. Also acts as an inflammation-resolving regulator by interacting with both TRIM25 and RIGI, subsequently impairing RIGI 'Lys-63'-linked polyubiquitination leading to IRF3 and NF-kappa-B inhibition. In terms of biological role, (Microbial infection) Plays a positive role in viral replication and pathogenesis of enteroviruses. This is Reticulon-3 (RTN3) from Homo sapiens (Human).